The primary structure comprises 223 residues: Phosphoribosylformylglycinamidine synthase subunit PurQ (223 aa).

The Glutamine amidotransferase type-1 domain occupies 3-223 (SAVVQLPGLN…FASALDVIAA (221 aa)). Cysteine 86 functions as the Nucleophile in the catalytic mechanism. Active-site residues include histidine 196 and glutamate 198.

In terms of assembly, part of the FGAM synthase complex composed of 1 PurL, 1 PurQ and 2 PurS subunits.

The protein resides in the cytoplasm. It catalyses the reaction N(2)-formyl-N(1)-(5-phospho-beta-D-ribosyl)glycinamide + L-glutamine + ATP + H2O = 2-formamido-N(1)-(5-O-phospho-beta-D-ribosyl)acetamidine + L-glutamate + ADP + phosphate + H(+). The catalysed reaction is L-glutamine + H2O = L-glutamate + NH4(+). Its pathway is purine metabolism; IMP biosynthesis via de novo pathway; 5-amino-1-(5-phospho-D-ribosyl)imidazole from N(2)-formyl-N(1)-(5-phospho-D-ribosyl)glycinamide: step 1/2. Its function is as follows. Part of the phosphoribosylformylglycinamidine synthase complex involved in the purines biosynthetic pathway. Catalyzes the ATP-dependent conversion of formylglycinamide ribonucleotide (FGAR) and glutamine to yield formylglycinamidine ribonucleotide (FGAM) and glutamate. The FGAM synthase complex is composed of three subunits. PurQ produces an ammonia molecule by converting glutamine to glutamate. PurL transfers the ammonia molecule to FGAR to form FGAM in an ATP-dependent manner. PurS interacts with PurQ and PurL and is thought to assist in the transfer of the ammonia molecule from PurQ to PurL. The sequence is that of Phosphoribosylformylglycinamidine synthase subunit PurQ from Rhizobium johnstonii (strain DSM 114642 / LMG 32736 / 3841) (Rhizobium leguminosarum bv. viciae).